A 340-amino-acid polypeptide reads, in one-letter code: S-adenosylmethionine:tRNA ribosyltransferase-isomerase (340 aa).

The protein belongs to the QueA family. In terms of assembly, monomer.

It is found in the cytoplasm. The catalysed reaction is 7-aminomethyl-7-carbaguanosine(34) in tRNA + S-adenosyl-L-methionine = epoxyqueuosine(34) in tRNA + adenine + L-methionine + 2 H(+). The protein operates within tRNA modification; tRNA-queuosine biosynthesis. Transfers and isomerizes the ribose moiety from AdoMet to the 7-aminomethyl group of 7-deazaguanine (preQ1-tRNA) to give epoxyqueuosine (oQ-tRNA). In Vesicomyosocius okutanii subsp. Calyptogena okutanii (strain HA), this protein is S-adenosylmethionine:tRNA ribosyltransferase-isomerase.